A 230-amino-acid chain; its full sequence is Sugar fermentation stimulation protein homolog (230 aa).

The protein belongs to the SfsA family.

This Caldivirga maquilingensis (strain ATCC 700844 / DSM 13496 / JCM 10307 / IC-167) protein is Sugar fermentation stimulation protein homolog.